Consider the following 358-residue polypeptide: MEAVDRPLRIEETTVSHDVSSCGFISKEEWLNKHPPSGSGWTDEDDDNDDVFSSSFISKEELSDAVHNDPPSGWTDEDDDDQVDPALEKEFYRQIRESDGFDVDIRIPTSSLYVYKCANNDDLRGDIVGICARVGLHWYNFQKGSNLELMHVDKYNSRFCALMTYNITAEAVDPANDSRFTFQTCVTRATCQKDEDLRILTEVCRIKPKIQGTGDEIKRWNDEAIDDIYKGNLPEWISDDTLMSCSEQDHFYRVQESDIREHNWLQLYTEIASYSLWEGDMRLKSCVPLQIKNVLVRTREDFKSKEKLKAGNAIFYISFRGVNTPHGPPQDHRAIVRRTVDGIPGHVCLEFKCLLMDL.

Residues 31–82 (LNKHPPSGSGWTDEDDDNDDVFSSSFISKEELSDAVHNDPPSGWTDEDDDDQ) form a disordered region. The span at 58–67 (SKEELSDAVH) shows a compositional bias: basic and acidic residues.

Belongs to the UPF0725 (EMB2204) family.

The polypeptide is UPF0725 protein At4g29550 (Arabidopsis thaliana (Mouse-ear cress)).